Consider the following 231-residue polypeptide: Large ribosomal subunit protein uL1 (231 aa).

This sequence belongs to the universal ribosomal protein uL1 family. Part of the 50S ribosomal subunit.

Its function is as follows. Binds directly to 23S rRNA. The L1 stalk is quite mobile in the ribosome, and is involved in E site tRNA release. In terms of biological role, protein L1 is also a translational repressor protein, it controls the translation of the L11 operon by binding to its mRNA. This chain is Large ribosomal subunit protein uL1, found in Cellvibrio japonicus (strain Ueda107) (Pseudomonas fluorescens subsp. cellulosa).